A 118-amino-acid polypeptide reads, in one-letter code: Ribosome-binding factor A (118 aa).

The protein belongs to the RbfA family. Monomer. Binds 30S ribosomal subunits, but not 50S ribosomal subunits or 70S ribosomes.

It is found in the cytoplasm. Functionally, one of several proteins that assist in the late maturation steps of the functional core of the 30S ribosomal subunit. Associates with free 30S ribosomal subunits (but not with 30S subunits that are part of 70S ribosomes or polysomes). Required for efficient processing of 16S rRNA. May interact with the 5'-terminal helix region of 16S rRNA. This chain is Ribosome-binding factor A, found in Bacillus cereus (strain AH820).